The sequence spans 487 residues: Probable cytosol aminopeptidase (487 aa).

Residues Lys253 and Asp258 each contribute to the Mn(2+) site. Lys265 is an active-site residue. Residues Asp277, Asp337, and Glu339 each coordinate Mn(2+). Arg341 is a catalytic residue.

It belongs to the peptidase M17 family. Requires Mn(2+) as cofactor.

Its subcellular location is the cytoplasm. The enzyme catalyses Release of an N-terminal amino acid, Xaa-|-Yaa-, in which Xaa is preferably Leu, but may be other amino acids including Pro although not Arg or Lys, and Yaa may be Pro. Amino acid amides and methyl esters are also readily hydrolyzed, but rates on arylamides are exceedingly low.. It catalyses the reaction Release of an N-terminal amino acid, preferentially leucine, but not glutamic or aspartic acids.. Its function is as follows. Presumably involved in the processing and regular turnover of intracellular proteins. Catalyzes the removal of unsubstituted N-terminal amino acids from various peptides. The chain is Probable cytosol aminopeptidase from Parasynechococcus marenigrum (strain WH8102).